Reading from the N-terminus, the 1049-residue chain is Ataxin-2-like protein (1049 aa).

Methionine 1 is modified (N-acetylmethionine). The tract at residues methionine 1–alanine 54 is disordered. Phosphoserine is present on serine 27. The residue at position 45 (threonine 45) is a Phosphothreonine. Positions serine 96–serine 119 are interaction with MPL. Residue serine 109 is modified to Phosphoserine. Position 116 is a phosphotyrosine (tyrosine 116). The Sm domain maps to arginine 120 to aspartate 197. Lysine 205 carries the post-translational modification N6-acetyllysine. The residue at position 236 (serine 236) is a Phosphoserine. Tyrosine 262 is modified (phosphotyrosine). Serine 304 carries the post-translational modification Phosphoserine. Phosphotyrosine is present on tyrosine 307. Over residues glutamate 314–serine 326 the composition is skewed to basic and acidic residues. 7 disordered regions span residues glutamate 314 to glutamate 522, glutamine 554 to arginine 573, glutamate 578 to glycine 704, valine 736 to glutamine 772, serine 824 to proline 852, histidine 868 to proline 944, and proline 999 to asparagine 1049. Polar residues predominate over residues valine 328 to leucine 340. Phosphoserine is present on residues serine 333 and serine 337. A Glycyl lysine isopeptide (Lys-Gly) (interchain with G-Cter in SUMO2) cross-link involves residue lysine 346. Tyrosine 347 carries the phosphotyrosine modification. Arginine 359 is modified (asymmetric dimethylarginine). The span at glycine 361 to proline 378 shows a compositional bias: low complexity. A phosphoserine mark is found at serine 389, serine 407, and serine 453. A compositionally biased stretch (low complexity) spans proline 454 to cysteine 466. A compositionally biased stretch (polar residues) spans valine 475–valine 487. Phosphoserine is present on residues serine 496 and serine 499. Over residues aspartate 508–arginine 519 the composition is skewed to basic and acidic residues. Serine 560, serine 561, and serine 562 each carry phosphoserine. The segment covering glutamate 578 to aspartate 587 has biased composition (basic and acidic residues). Serine 597 bears the Phosphoserine mark. The residue at position 635 (threonine 635) is a Phosphothreonine. A phosphoserine mark is found at serine 637, serine 677, serine 683, and serine 687. Over residues serine 681–serine 697 the composition is skewed to low complexity. 2 stretches are compositionally biased toward polar residues: residues serine 824–glutamine 845 and glutamine 878–alanine 902. Residues serine 935 to proline 944 show a composition bias toward low complexity. A compositionally biased stretch (polar residues) spans glutamine 1033–leucine 1042.

Belongs to the ataxin-2 family. Interacts with MPL/TPOR and EPOR and dissociates after ligand stimulation. Interacts with DDX6, G3BP, and ATXN2. Interacts with PRMT1. Interacts with CIC and ATXN1. Post-translationally, thrombopoietin triggers the phosphorylation on tyrosine residues in a way that is dependent on MPL C-terminal domain. In terms of processing, asymmetrically dimethylated. Probably methylated by PRMT1. As to expression, expressed in cerebellum.

The protein localises to the membrane. Its subcellular location is the cytoplasm. It is found in the nucleus speckle. The protein resides in the cytoplasmic granule. Its function is as follows. Involved in the regulation of stress granule and P-body formation. This Mus musculus (Mouse) protein is Ataxin-2-like protein (Atxn2l).